A 503-amino-acid polypeptide reads, in one-letter code: Cobyric acid synthase (503 aa).

A GATase cobBQ-type domain is found at 255–444 (AIDVAVIRCP…MHDLFHNDAF (190 aa)). C337 acts as the Nucleophile in catalysis. The active site involves H436.

This sequence belongs to the CobB/CobQ family. CobQ subfamily.

It functions in the pathway cofactor biosynthesis; adenosylcobalamin biosynthesis. Functionally, catalyzes amidations at positions B, D, E, and G on adenosylcobyrinic A,C-diamide. NH(2) groups are provided by glutamine, and one molecule of ATP is hydrogenolyzed for each amidation. This is Cobyric acid synthase from Geobacillus kaustophilus (strain HTA426).